A 721-amino-acid chain; its full sequence is MGMIEPNRSVLLNGSMNGSENIKDLFHEDAQVSQLQSRPWWKIQLFVWEPVLFGTWDGVFTSCMINIFGVVLFLRTGWLVGNTGVLLGIVLVSFVILVALVTVLSGIGVCERCSIGSGGVYSMVSTVLGGKVGGTIGVLYIFGQCVAGAMYITGFAESISDLLNLENMWVVRGISLAVLVGLLGINLAGVKWIIRLQLLLFLLLAVSTLDFVIGSFTHLDPENGFVGYSEELLRNNTFPDYTPGESFFTVFGVFFPAATGVMVGFNMSGDLQRPSINIPLGSLAAIGTSWFLYVVFVFLLGAICTREFLRYEFMIAEKVSLVGGLFLLGLYISSLASCMGGLYGAPRILQCIAQEKVIPALSFLGRGKGPNKTPVAAIFITGLLTMAFVFIGQVNVLAPIVTINFMLTYSAVDYSYFSVTMSYKMQHSPKKNGRPNSRVMSSTQPLILNKSTSYGSNGTLLEFTKDMNQLFKPNHTEAPESTSSQEKDPKMFKFSKPRKPAKQTLQDSFQLDLHQGPEHGLESRLLVTDLAENESQNSKAEITEDKNQGVDPTESDEPDSEEDVDIQQPTEEQKGDSTVAQKVPEFEIQELSTSFYAKFCNHWVAFLGAILSIVIMFVIQWIYALVNLGVAIILYLYIGRVNPGLNPGAAANFSFFAWIRQGARTLCRKPHPKEQFVVTPSLLSVGMETTQLTEENEDFASRGRYHHSSIITQGQFIDRYN.

11 consecutive transmembrane segments (helical) span residues 53-73, 84-104, 115-135, 136-156, 174-194, 196-216, 247-267, 283-303, 321-341, 374-394, and 397-417; these read FGTW…VVLF, GVLL…VTVL, IGSG…VGGT, IGVL…TGFA, ISLA…KWII, LQLL…IGSF, FFTV…GFNM, LAAI…LGAI, LVGG…CMGG, PVAA…IGQV, and LAPI…YSYF. Disordered stretches follow at residues 473 to 505 and 533 to 580; these read PNHT…KQTL and NESQ…STVA. Residues 553–565 show a composition bias toward acidic residues; that stretch reads TESDEPDSEEDVD. Helical transmembrane passes span 606-626 and 628-648; these read FLGA…YALV and LGVA…LNPG.

Belongs to the SLC12A transporter family.

The protein localises to the membrane. Functionally, cation/chloride cotransporter. The protein is Solute carrier family 12 member 8 (slc12a8) of Xenopus laevis (African clawed frog).